Reading from the N-terminus, the 348-residue chain is MIEIDGSYGEGGGQVLRTSLSLAAITGEPIRIAGIRAGRKKPGLAAQHLTAVRAAGRICNAQLRGDALGSMLLEFIPGSAVQAGIYTFDVSKAQEGGSAGAIALVLQTILLPLALATGNSQVTLKGGTHVNFSPTVTYIEQVYLPILQRMGVEAQVKLGAWGWFPQGGGEIELQVIGGTQLGGINLLERGELQQVRGIAAVTELPSHIPQRMANRAENLLREAHLKVRVQTLREKGVAPGAGIFLTAEYQNSLTGFGGFGRLRLSAETVAEIACQQLLEFHYTGAAVDEHLADQLLLPATLASQESQYQVAEVSRHLITNAAVIEQFGLAQIRVNEADKIVSVKSLTS.

Residues Gln-107 and 290–294 (HLADQ) each bind ATP. His-316 acts as the Tele-AMP-histidine intermediate in catalysis.

The protein belongs to the RNA 3'-terminal cyclase family. Type 1 subfamily.

Its subcellular location is the cytoplasm. The catalysed reaction is a 3'-end 3'-phospho-ribonucleotide-RNA + ATP = a 3'-end 2',3'-cyclophospho-ribonucleotide-RNA + AMP + diphosphate. Catalyzes the conversion of 3'-phosphate to a 2',3'-cyclic phosphodiester at the end of RNA. The mechanism of action of the enzyme occurs in 3 steps: (A) adenylation of the enzyme by ATP; (B) transfer of adenylate to an RNA-N3'P to produce RNA-N3'PP5'A; (C) and attack of the adjacent 2'-hydroxyl on the 3'-phosphorus in the diester linkage to produce the cyclic end product. The biological role of this enzyme is unknown but it is likely to function in some aspects of cellular RNA processing. This Nostoc punctiforme (strain ATCC 29133 / PCC 73102) protein is RNA 3'-terminal phosphate cyclase.